Consider the following 291-residue polypeptide: Putative ribosomal protein uL16-like, mitochondrial (291 aa).

The N-terminal 27 residues, 1-27, are a transit peptide targeting the mitochondrion; that stretch reads MQRFMFSRVVEHQRQISRGFLSLVPSL. Residues 127–137 show a composition bias toward basic and acidic residues; the sequence is VHETSNNEKKQ. A disordered region spans residues 127–173; the sequence is VHETSNNEKKQQKQKSSVNEKKPKKKKKSSISDIPRRTKFQKHHRGR. The segment covering 163 to 173 has biased composition (basic residues); it reads RTKFQKHHRGR.

The protein belongs to the universal ribosomal protein uL16 family.

It localises to the mitochondrion. Its function is as follows. Could be a component of the large subunit of mitochondrial ribosome. This Arabidopsis thaliana (Mouse-ear cress) protein is Putative ribosomal protein uL16-like, mitochondrial.